We begin with the raw amino-acid sequence, 225 residues long: MFSFGIILLTVVSFTNAQWRQDMFTTAENQLRSIVQNGQTLLDFIYQERQKHGGGNMTGGSLMSHNVAYSSFINDVETRLADMEQATQELVRIMRTCPDAPLAPPPPTNVIVESTTIDNVSSIVVKWDPPFNPPENMQYKVYFVPVDQNGMQTAGEVVFRICDSTQTIASITDLTPRSRYRIRVGAVAGAVAEGASMPLNVKTPDIIPSRVRNVMVKSSTANTIT.

The signal sequence occupies residues 1-17 (MFSFGIILLTVVSFTNA). In terms of domain architecture, Fibronectin type-III spans 106 to 206 (PPTNVIVEST…MPLNVKTPDI (101 aa)).

As to expression, component of the organic matrix of calcified shell layers like nacre and prisms.

The protein localises to the secreted. This is Fibronectin type III domain-containing protein from Mytilus californianus (California mussel).